Consider the following 246-residue polypeptide: Bromelain inhibitor (246 aa).

The N-terminal stretch at 1 to 19 (MNMLLLFLHEVINGERVTL) is a signal peptide. Intrachain disulfides connect Cys-22-Cys-42, Cys-25-Cys-74, Cys-27-Cys-40, Cys-49-Cys-56, and Cys-53-Cys-65. Positions 31 to 35 (TSSSD) are excised as a propeptide. 2 propeptides span residues 77-95 (PVSS…RVTL) and 107-111 (TSSSD). Intrachain disulfides connect Cys-98/Cys-118, Cys-101/Cys-150, Cys-103/Cys-116, Cys-125/Cys-132, and Cys-129/Cys-141. Propeptides lie at residues 153–171 (PVSS…RVTL) and 183–187 (TSSSD). Intrachain disulfides connect Cys-174/Cys-194, Cys-177/Cys-226, Cys-179/Cys-192, Cys-201/Cys-208, and Cys-205/Cys-217. The propeptide occupies 229–246 (PVSSWEARQKIKLLQGRE).

It belongs to the protease inhibitor I67 family. Each inhibitor is composed of two chains, designated A and B linked by three disulfide bonds.

Functionally, weak inhibitor of cysteine proteinases. In Ananas comosus (Pineapple), this protein is Bromelain inhibitor.